The sequence spans 385 residues: WD repeat-containing protein RUP1 (385 aa).

WD repeat units follow at residues 69–108 (TGSD…ESRD), 119–160 (CTPA…PVSE), 163–205 (EHGG…TLEE), 210–250 (GGGA…DPLI), 254–292 (GHTK…RVVR), 298–337 (VNSR…PVWV), and 348–385 (SDRR…GKQS).

As to quaternary structure, interacts with UVR8. Interacts directly with DHU1.

Its subcellular location is the nucleus. It localises to the cytoplasm. The protein localises to the cytosol. In terms of biological role, functions in association with RUP2 as repressor of UV-B-induced photomorphogenesis mediated by UVR8 and HY5, likely in coordination with DHU1. Plays a crucial negative feedback regulatory role downstream of UVR8-COP1 to inhibit UVR8 function, balance UV-B-specific responses and ensure normal plant growth. Is involved in the regulation of photoperiodic flowering and vegetative development. This is WD repeat-containing protein RUP1 from Arabidopsis thaliana (Mouse-ear cress).